A 721-amino-acid chain; its full sequence is Polyribonucleotide nucleotidyltransferase (721 aa).

Mg(2+) contacts are provided by D495 and D501. Positions 562 to 621 constitute a KH domain; sequence PRITTIKIRPERIKDIIGPGGKTIKDITARTGTSINIEDDGSVSIASPNQDKVEEAIKMI. The S1 motif domain maps to 631 to 699; sequence GRIYLGTVRK…RSGKIRLSRK (69 aa). Positions 699-721 are disordered; the sequence is KEALADSAKKSEGTEPPKGEPAK.

Belongs to the polyribonucleotide nucleotidyltransferase family. The cofactor is Mg(2+).

The protein localises to the cytoplasm. The catalysed reaction is RNA(n+1) + phosphate = RNA(n) + a ribonucleoside 5'-diphosphate. Involved in mRNA degradation. Catalyzes the phosphorolysis of single-stranded polyribonucleotides processively in the 3'- to 5'-direction. This Anaeromyxobacter sp. (strain K) protein is Polyribonucleotide nucleotidyltransferase.